The primary structure comprises 107 residues: High mobility group protein HMG-I/HMG-Y (107 aa).

Residues 1-13 (MSESGSKSSQPLA) show a composition bias toward polar residues. Positions 1 to 107 (MSESGSKSSQ…ISQESSEEEQ (107 aa)) are disordered. Ser-2 carries the post-translational modification N-acetylserine. N6-acetyllysine is present on Lys-7. Ser-8 bears the ADP-ribosylserine mark. Ser-9 bears the ADP-ribosylserine; alternate mark. Residue Ser-9 is modified to Phosphoserine; alternate. Lys-15 bears the N6-acetyllysine; alternate mark. Lys-15 is covalently cross-linked (Glycyl lysine isopeptide (Lys-Gly) (interchain with G-Cter in SUMO2); alternate). Positions 15 to 24 (KQEKDGTEKR) are enriched in basic and acidic residues. Positions 21–31 (TEKRGRGRPRK) form a DNA-binding region, a.T hook 1. Arg-26 is subject to Asymmetric dimethylarginine; alternate. Position 26 is an omega-N-methylarginine; alternate (Arg-26). A Symmetric dimethylarginine; alternate modification is found at Arg-26. Ser-36 is modified (phosphoserine; by HIPK2 and CDC2). Thr-39 is modified (phosphothreonine). Residues Ser-44 and Ser-49 each carry the phosphoserine modification. At Thr-53 the chain carries Phosphothreonine; by HIPK2 and CDC2. 2 DNA-binding regions (a.T hook) span residues 53–63 (TPKRPRGRPKG) and 78–89 (APGRKPRGRPKK). An interaction with HIPK2 region spans residues 53–77 (TPKRPRGRPKGSKNKGAAKTRKVTT). Residues 55 to 74 (KRPRGRPKGSKNKGAAKTRK) show a composition bias toward basic residues. An asymmetric dimethylarginine; by PRMT6; alternate mark is found at Arg-58 and Arg-60. An omega-N-methylarginine; by PRMT6; alternate mark is found at Arg-58 and Arg-60. Residues 93–107 (EEEEGISQESSEEEQ) are compositionally biased toward acidic residues. Ser-99, Ser-102, and Ser-103 each carry phosphoserine.

It belongs to the HMGA family. As to quaternary structure, interacts with HIPK2. Isoforms HMG-I and HMG-Y can be phosphorylated by HIPK2. Phosphorylation may modulate DNA-binding affinity. In terms of processing, methylation at Arg-58 is mutually exclusive with methylation at Arg-60.

The protein resides in the nucleus. It localises to the chromosome. In terms of biological role, HMG-I/Y bind preferentially to the minor groove of A+T rich regions in double-stranded DNA. It is suggested that these proteins could function in nucleosome phasing and in the 3'-end processing of mRNA transcripts. They are also involved in the transcription regulation of genes containing, or in close proximity to A+T-rich regions. The chain is High mobility group protein HMG-I/HMG-Y (Hmga1) from Mus musculus (Mouse).